Here is a 165-residue protein sequence, read N- to C-terminus: Glucosamine 6-phosphate N-acetyltransferase (165 aa).

Positions 22–165 (FKVRPLAKDD…DDCNFMTQRF (144 aa)) constitute an N-acetyltransferase domain. Substrate is bound by residues T44, 92–95 (KFIH), and 104–106 (EDV). An acetyl-CoA-binding site is contributed by 114–119 (RQKLGA). Residues 135 to 136 (YK) and R164 each bind substrate.

It belongs to the acetyltransferase family. GNA1 subfamily.

The enzyme catalyses D-glucosamine 6-phosphate + acetyl-CoA = N-acetyl-D-glucosamine 6-phosphate + CoA + H(+). Its pathway is nucleotide-sugar biosynthesis; UDP-N-acetyl-alpha-D-glucosamine biosynthesis; N-acetyl-alpha-D-glucosamine 1-phosphate from alpha-D-glucosamine 6-phosphate (route I): step 1/2. The protein is Glucosamine 6-phosphate N-acetyltransferase (gna-1) of Caenorhabditis elegans.